The sequence spans 331 residues: Phosphoribosylformylglycinamidine cyclo-ligase (331 aa).

Belongs to the AIR synthase family.

The protein resides in the cytoplasm. It carries out the reaction 2-formamido-N(1)-(5-O-phospho-beta-D-ribosyl)acetamidine + ATP = 5-amino-1-(5-phospho-beta-D-ribosyl)imidazole + ADP + phosphate + H(+). Its pathway is purine metabolism; IMP biosynthesis via de novo pathway; 5-amino-1-(5-phospho-D-ribosyl)imidazole from N(2)-formyl-N(1)-(5-phospho-D-ribosyl)glycinamide: step 2/2. The polypeptide is Phosphoribosylformylglycinamidine cyclo-ligase (Clostridium botulinum (strain Loch Maree / Type A3)).